The following is a 217-amino-acid chain: Large ribosomal subunit protein uL1 (217 aa).

This sequence belongs to the universal ribosomal protein uL1 family. Component of the large ribosomal subunit (LSU). Mature ribosomes consist of a small (40S) and a large (60S) subunit. The 40S subunit contains about 32 different proteins and 1 molecule of RNA (18S). The 60S subunit contains 45 different proteins and 3 molecules of RNA (25S, 5.8S and 5S). uL1 forms part of the L1 stalk.

The protein localises to the cytoplasm. Component of the ribosome, a large ribonucleoprotein complex responsible for the synthesis of proteins in the cell. The small ribosomal subunit (SSU) binds messenger RNAs (mRNAs) and translates the encoded message by selecting cognate aminoacyl-transfer RNA (tRNA) molecules. The large subunit (LSU) contains the ribosomal catalytic site termed the peptidyl transferase center (PTC), which catalyzes the formation of peptide bonds, thereby polymerizing the amino acids delivered by tRNAs into a polypeptide chain. The nascent polypeptides leave the ribosome through a tunnel in the LSU and interact with protein factors that function in enzymatic processing, targeting, and the membrane insertion of nascent chains at the exit of the ribosomal tunnel. uL1 forms part of the L1 stalk, a mobile element that plays a role in evacuating the exit-site tRNA. In Candida albicans (strain SC5314 / ATCC MYA-2876) (Yeast), this protein is Large ribosomal subunit protein uL1 (RPL10A).